The sequence spans 247 residues: Uridylate kinase (247 aa).

15-18 (KLSG) contacts ATP. An involved in allosteric activation by GTP region spans residues 23 to 28 (GEEGFG). Gly57 serves as a coordination point for UMP. Positions 58 and 62 each coordinate ATP. Residues Asp77 and 138–145 (TGNPFFTT) each bind UMP. ATP contacts are provided by Thr165, Tyr171, and Asp174.

The protein belongs to the UMP kinase family. Homohexamer.

It is found in the cytoplasm. It carries out the reaction UMP + ATP = UDP + ADP. The protein operates within pyrimidine metabolism; CTP biosynthesis via de novo pathway; UDP from UMP (UMPK route): step 1/1. With respect to regulation, allosterically activated by GTP. Inhibited by UTP. Its function is as follows. Catalyzes the reversible phosphorylation of UMP to UDP. The chain is Uridylate kinase from Pseudoalteromonas atlantica (strain T6c / ATCC BAA-1087).